A 158-amino-acid chain; its full sequence is Ethylene-responsive transcription factor ERF120 (158 aa).

Positions 86-147 form a DNA-binding region, AP2/ERF; sequence KHKGVRKKPS…SARRGTKNGE (62 aa). Residues 134 to 158 are disordered; that stretch reads VGRRSARRGTKNGEEASTKKTTEKN. The span at 144–158 shows a compositional bias: basic and acidic residues; sequence KNGEEASTKKTTEKN.

This sequence belongs to the AP2/ERF transcription factor family. ERF subfamily.

The protein localises to the nucleus. Probably acts as a transcriptional activator. Binds to the GCC-box pathogenesis-related promoter element. May be involved in the regulation of gene expression by stress factors and by components of stress signal transduction pathways. The protein is Ethylene-responsive transcription factor ERF120 (ERF120) of Arabidopsis thaliana (Mouse-ear cress).